We begin with the raw amino-acid sequence, 68 residues long: Protein SlyX homolog (68 aa).

This sequence belongs to the SlyX family.

This is Protein SlyX homolog from Brucella suis (strain ATCC 23445 / NCTC 10510).